Consider the following 484-residue polypeptide: Aldehyde dehydrogenase family 3 member A2 (484 aa).

Topologically, residues 1–463 (MERQVQRLRQ…FLLKQFNKGR (463 aa)) are cytoplasmic. An NAD(+)-binding site is contributed by 185–190 (GNTAVG). Residues glutamate 207 and cysteine 241 contribute to the active site. Serine 293 is modified (phosphoserine). Residues 464-484 (LQLLLLVCLVAVAAVIVKDQL) form a helical membrane-spanning segment. Residues 481–484 (KDQL) carry the Prevents secretion from ER motif.

The protein belongs to the aldehyde dehydrogenase family. As to quaternary structure, homodimer. The N-terminus is blocked.

The protein resides in the microsome membrane. The protein localises to the endoplasmic reticulum membrane. The catalysed reaction is an aldehyde + NAD(+) + H2O = a carboxylate + NADH + 2 H(+). It carries out the reaction a fatty aldehyde + NAD(+) + H2O = a fatty acid + NADH + 2 H(+). It catalyses the reaction (2E)-hexadecenal + NAD(+) + H2O = (E)-hexadec-2-enoate + NADH + 2 H(+). The enzyme catalyses hexadecanoate + NADH + 2 H(+) = hexadecanal + NAD(+) + H2O. The catalysed reaction is 22-oxodocosanoate + NAD(+) + H2O = docosanedioate + NADH + 2 H(+). It carries out the reaction 2,6,10,14-tetramethylpentadecanal + NAD(+) + H2O = 2,6,10,14-tetramethylpentadecanoate + NADH + 2 H(+). It catalyses the reaction octadecanal + NAD(+) + H2O = octadecanoate + NADH + 2 H(+). The enzyme catalyses dodecanoate + NADH + 2 H(+) = dodecanal + NAD(+) + H2O. The catalysed reaction is decanal + NAD(+) + H2O = decanoate + NADH + 2 H(+). It carries out the reaction tetradecanal + NAD(+) + H2O = tetradecanoate + NADH + 2 H(+). It catalyses the reaction octanal + NAD(+) + H2O = octanoate + NADH + 2 H(+). The enzyme catalyses heptanal + NAD(+) + H2O = heptanoate + NADH + 2 H(+). The catalysed reaction is (2E,6E)-farnesal + NAD(+) + H2O = (2E,6E)-farnesoate + NADH + 2 H(+). Functionally, catalyzes the oxidation of medium and long-chain aliphatic aldehydes to fatty acids. Active on a variety of saturated and unsaturated aliphatic aldehydes between 6 and 24 carbons in length. Responsible for conversion of the sphingosine 1-phosphate (S1P) degradation product hexadecenal to hexadecenoic acid. The chain is Aldehyde dehydrogenase family 3 member A2 (Aldh3a2) from Rattus norvegicus (Rat).